A 463-amino-acid polypeptide reads, in one-letter code: Heterogeneous nuclear ribonucleoprotein K (463 aa).

Residue methionine 1 is modified to N-acetylmethionine. Residues 1–37 (METEQPEETFPNTETNGEFGKRPAEDMEEEQAFKRSR) are disordered. A necessary for interaction with DDX1 region spans residues 1 to 276 (METEQPEETF…GRGGRPMPPS (276 aa)). The segment covering 19 to 37 (FGKRPAEDMEEEQAFKRSR) has biased composition (basic and acidic residues). Lysine 34 bears the N6-acetyllysine; alternate mark. Lysine 34 is covalently cross-linked (Glycyl lysine isopeptide (Lys-Gly) (interchain with G-Cter in SUMO1); alternate). A Glycyl lysine isopeptide (Lys-Gly) (interchain with G-Cter in SUMO2); alternate cross-link involves residue lysine 34. The segment at 35–197 (RSRNTDEMVE…STDRVVLIGG (163 aa)) is interaction with ASFV p30. At serine 36 the chain carries Phosphoserine. A Phosphothreonine modification is found at threonine 39. Residues 42–104 (MVELRILLQS…ETIGEILKKI (63 aa)) enclose the KH 1 domain. Glycyl lysine isopeptide (Lys-Gly) (interchain with G-Cter in SUMO2) cross-links involve residues lysine 52 and lysine 60. Tandem repeats lie at residues 54 to 76 (AGAVIGKGGKNIKALRTDYNASV) and 59 to 62 (GKGG). Residues 54 to 421 (AGAVIGKGGK…QIRHESGASI (368 aa)) form a 2 X 22 AA approximate repeats region. A 5 X 4 AA repeats of G-X-G-G region spans residues 59–407 (GKGGKNIKAL…LAGSIIGKGG (349 aa)). Phosphoserine is present on residues serine 75 and serine 116. Positions 144 to 209 (DCELRLLIHQ…DRVVECIKII (66 aa)) constitute a KH 2 domain. A Glycyl lysine isopeptide (Lys-Gly) (interchain with G-Cter in SUMO1); alternate cross-link involves residue lysine 163. Residue lysine 163 forms a Glycyl lysine isopeptide (Lys-Gly) (interchain with G-Cter in SUMO2); alternate linkage. Lysine 198 is subject to N6-acetyllysine. Positions 209 to 337 (ILDLISESPI…RPGDRYDGMV (129 aa)) are interaction with ZIK1. 2 positions are modified to phosphoserine: serine 214 and serine 216. Lysine 219 participates in a covalent cross-link: Glycyl lysine isopeptide (Lys-Gly) (interchain with G-Cter in SUMO2); alternate. N6-succinyllysine; alternate is present on lysine 219. Residues 236–273 (YGGFTMMFDDRRGRPVGFPMRGRGGFDRMPPGRGGRPM) are RNA-binding RGG-box. 3 tandem repeats follow at residues 245 to 250 (DRRGRP), 257 to 260 (GRGG), and 267 to 270 (GRGG). The segment at 245 to 329 (DRRGRPVGFP…LMAYDRRGRP (85 aa)) is 2 X 6 AA approximate repeats. Positions 250–329 (PVGFPMRGRG…LMAYDRRGRP (80 aa)) are disordered. Positions 252 to 266 (GFPMRGRGGFDRMPP) are enriched in low complexity. Over residues 276–285 (SRRDYDDMSP) the composition is skewed to basic and acidic residues. Serine 284 carries the post-translational modification Phosphoserine. Residues 295–298 (GRGG) form a 3-4 repeat. The residue at position 316 (arginine 316) is an Omega-N-methylarginine. A 2-2 repeat occupies 324 to 329 (DRRGRP). The residue at position 377 (arginine 377) is an Omega-N-methylarginine. Serine 379 carries the post-translational modification Phosphoserine. Tyrosine 380 carries the phosphotyrosine modification. A KH 3 domain is found at 387–451 (IITTQVTIPK…DQIQNAQYLL (65 aa)). 2 tandem repeats follow at residues 399 to 421 (AGSIIGKGGQRIKQIRHESGASI) and 404 to 407 (GKGG). Residue lysine 405 is modified to N6-acetyllysine; alternate. A Glycyl lysine isopeptide (Lys-Gly) (interchain with G-Cter in SUMO2); alternate cross-link involves residue lysine 405. The residue at position 420 (serine 420) is a Phosphoserine. Lysine 422 is covalently cross-linked (Glycyl lysine isopeptide (Lys-Gly) (interchain with G-Cter in SUMO1); alternate). Lysine 422 participates in a covalent cross-link: Glycyl lysine isopeptide (Lys-Gly) (interchain with G-Cter in SUMO2); alternate. A Glycyl lysine isopeptide (Lys-Gly) (interchain with G-Cter in SUMO); alternate cross-link involves residue lysine 422.

Identified in the spliceosome C complex. Part of a transcription inhibitory ribonucleoprotein complex composed at least of the circular RNA circZNF827, ZNF827 and HNRNPL. Interacts with RBM42 and ZIK1. Interacts with BRDT. Interacts with ANKRD28. Interacts with ASFV p30 protein. Interacts with DDX1. Interacts with MDM2; this interaction leads to ubiquitination and proteasomal degradation. Interacts with p53/TP53. Interacts with IVNS1ABP (via BACK domain); the interaction is direct. Interacts with PPIA/CYPA. In terms of assembly, (Microbial infection) Interacts with HCV core protein. In terms of processing, arg-296 and Arg-299 are dimethylated, probably to asymmetric dimethylarginine. Sumoylated by CBX4. Sumoylation is increased upon DNA damage, such as that produced by doxorubicin, etoposide, UV light and camptothecin, due to enhanced CBX4 phosphorylation by HIPK2 under these conditions. Post-translationally, ubiquitinated by MDM2. Doxorubicin treatment does not affect monoubiquitination, but slightly decreases HNRNPK poly-ubiquitination. In terms of processing, O-glycosylated (O-GlcNAcylated), in a cell cycle-dependent manner.

The protein localises to the cytoplasm. Its subcellular location is the nucleus. The protein resides in the nucleoplasm. It localises to the cell projection. It is found in the podosome. In terms of biological role, one of the major pre-mRNA-binding proteins. Binds tenaciously to poly(C) sequences. Likely to play a role in the nuclear metabolism of hnRNAs, particularly for pre-mRNAs that contain cytidine-rich sequences. Can also bind poly(C) single-stranded DNA. Plays an important role in p53/TP53 response to DNA damage, acting at the level of both transcription activation and repression. When sumoylated, acts as a transcriptional coactivator of p53/TP53, playing a role in p21/CDKN1A and 14-3-3 sigma/SFN induction. As far as transcription repression is concerned, acts by interacting with long intergenic RNA p21 (lincRNA-p21), a non-coding RNA induced by p53/TP53. This interaction is necessary for the induction of apoptosis, but not cell cycle arrest. As part of a ribonucleoprotein complex composed at least of ZNF827, HNRNPL and the circular RNA circZNF827 that nucleates the complex on chromatin, may negatively regulate the transcription of genes involved in neuronal differentiation. This Homo sapiens (Human) protein is Heterogeneous nuclear ribonucleoprotein K (HNRNPK).